Consider the following 289-residue polypeptide: ATP phosphoribosyltransferase (289 aa).

This sequence belongs to the ATP phosphoribosyltransferase family. Long subfamily. The cofactor is Mg(2+).

It localises to the cytoplasm. The catalysed reaction is 1-(5-phospho-beta-D-ribosyl)-ATP + diphosphate = 5-phospho-alpha-D-ribose 1-diphosphate + ATP. It functions in the pathway amino-acid biosynthesis; L-histidine biosynthesis; L-histidine from 5-phospho-alpha-D-ribose 1-diphosphate: step 1/9. Feedback inhibited by histidine. Catalyzes the condensation of ATP and 5-phosphoribose 1-diphosphate to form N'-(5'-phosphoribosyl)-ATP (PR-ATP). Has a crucial role in the pathway because the rate of histidine biosynthesis seems to be controlled primarily by regulation of HisG enzymatic activity. The sequence is that of ATP phosphoribosyltransferase from Solibacter usitatus (strain Ellin6076).